Consider the following 441-residue polypeptide: Homoserine dehydrogenase (441 aa).

Residues Asn17 and Val18 each contribute to the NADP(+) site. NAD(+)-binding residues include Val18, Val37, and Gly47. Val18 provides a ligand contact to NADPH. 3 residues coordinate NADP(+): Arg49, Arg50, and Lys107. Arg49 contacts NADPH. NADPH is bound at residue Lys107. Na(+)-binding residues include Glu131, Val134, Gly136, and Ile138. Residues Gly189 and Glu192 each coordinate NADP(+). Glu192 and Asp203 together coordinate L-homoserine. The Proton donor role is filled by Lys207. Residue Gly309 coordinates NADP(+). Residue Gly309 participates in NAD(+) binding. Residue Gly309 participates in NADPH binding. The region spanning Tyr356 to Arg435 is the ACT domain.

The protein belongs to the homoserine dehydrogenase family. It depends on a metal cation as a cofactor.

It catalyses the reaction L-homoserine + NADP(+) = L-aspartate 4-semialdehyde + NADPH + H(+). The enzyme catalyses L-homoserine + NAD(+) = L-aspartate 4-semialdehyde + NADH + H(+). It participates in amino-acid biosynthesis; L-methionine biosynthesis via de novo pathway; L-homoserine from L-aspartate: step 3/3. Its pathway is amino-acid biosynthesis; L-threonine biosynthesis; L-threonine from L-aspartate: step 3/5. In terms of biological role, catalyzes the conversion of L-aspartate-beta-semialdehyde (L-Asa) to L-homoserine (L-Hse), the third step in the biosynthesis of threonine and methionine from aspartate. This chain is Homoserine dehydrogenase (hom), found in Mycobacterium tuberculosis (strain CDC 1551 / Oshkosh).